The chain runs to 1120 residues: Putative GTPase-activating protein AN11010 (1120 aa).

Residues 291–479 form the Rab-GAP TBC domain; sequence GLPNRLRGEI…RVLDVFFLEG (189 aa). 5 disordered regions span residues 673 to 702, 859 to 903, 960 to 979, 1017 to 1068, and 1081 to 1120; these read DSPGPSRKQSDSGSFRGLGRPTMNKRPSPA, DEVK…PNNP, AAKQQPTSSGPTVAGASGGI, RNAL…ETDR, and GKDDVSLLDDKDSHQESSSGQRTAAGSDDKVVSKVVEFES. Low complexity predominate over residues 864 to 878; it reads ESTPSPEGETPGTPS. A compositionally biased stretch (polar residues) spans 960–970; it reads AAKQQPTSSGP. The segment covering 1023 to 1032 has biased composition (acidic residues); that stretch reads DDDDEDDEDD. 2 stretches are compositionally biased toward basic and acidic residues: residues 1057–1068 and 1081–1095; these read DPERRSVRETDR and GKDDVSLLDDKDSHQ.

This Emericella nidulans (strain FGSC A4 / ATCC 38163 / CBS 112.46 / NRRL 194 / M139) (Aspergillus nidulans) protein is Putative GTPase-activating protein AN11010.